We begin with the raw amino-acid sequence, 103 residues long: MKNPLLRPWLTEKSTKLTEQKGQYVFQVKIDADKFDIKKAVEEKFGVDVVSIRTINCLGKSKRQYTRKGLIAGKKSDWKKAIVTLGDGQTIDYYAKPAEKSEK.

It belongs to the universal ribosomal protein uL23 family. As to quaternary structure, part of the 50S ribosomal subunit. Contacts protein L29, and trigger factor when it is bound to the ribosome.

In terms of biological role, one of the early assembly proteins it binds 23S rRNA. One of the proteins that surrounds the polypeptide exit tunnel on the outside of the ribosome. Forms the main docking site for trigger factor binding to the ribosome. This is Large ribosomal subunit protein uL23 from Chlorobaculum tepidum (strain ATCC 49652 / DSM 12025 / NBRC 103806 / TLS) (Chlorobium tepidum).